Here is a 439-residue protein sequence, read N- to C-terminus: Protein CNPPD1 (439 aa).

The helical transmembrane segment at 231–251 threads the bilayer; the sequence is CLLGVVYLTGFAAVFTSIAVV. The disordered stretch occupies residues 283–302; it reads ALAPEQPQPKLPDVSPPSST.

Belongs to the CNPPD1 family.

Its subcellular location is the membrane. In Gallus gallus (Chicken), this protein is Protein CNPPD1 (CNPPD1).